The sequence spans 258 residues: UPF0246 protein YaaA (258 aa).

Belongs to the UPF0246 family.

The sequence is that of UPF0246 protein YaaA from Escherichia coli O45:K1 (strain S88 / ExPEC).